The chain runs to 275 residues: Penicillin-insensitive murein endopeptidase (275 aa).

Residues 1–19 form the signal peptide; it reads MKNWIVGMVALVTMVPVMA. Cystine bridges form between Cys-44–Cys-264, Cys-187–Cys-235, and Cys-216–Cys-223. Zn(2+)-binding residues include His-110, His-113, Asp-120, Asp-147, and His-211. The disordered stretch occupies residues 227–262; that stretch reads DTPPPGDGCGAELESWFQPPPPSAKPGKTLPPPLPP. Pro residues predominate over residues 244-262; the sequence is QPPPPSAKPGKTLPPPLPP.

Belongs to the peptidase M74 family. As to quaternary structure, dimer. It depends on Zn(2+) as a cofactor.

It localises to the periplasm. Its function is as follows. Murein endopeptidase that cleaves the D-alanyl-meso-2,6-diamino-pimelyl amide bond that connects peptidoglycan strands. Likely plays a role in the removal of murein from the sacculus. The protein is Penicillin-insensitive murein endopeptidase of Yersinia pestis.